A 162-amino-acid polypeptide reads, in one-letter code: Mediator of RNA polymerase II transcription subunit 31 (162 aa).

Residues valine 131–threonine 162 are disordered. Positions aspartate 141–threonine 162 are enriched in basic and acidic residues.

Belongs to the Mediator complex subunit 31 family. In terms of assembly, component of the Mediator complex.

The protein resides in the nucleus. Component of the Mediator complex, a coactivator involved in the regulated transcription of nearly all RNA polymerase II-dependent genes. Mediator functions as a bridge to convey information from gene-specific regulatory proteins to the basal RNA polymerase II transcription machinery. Mediator is recruited to promoters by direct interactions with regulatory proteins and serves as a scaffold for the assembly of a functional preinitiation complex with RNA polymerase II and the general transcription factors. The polypeptide is Mediator of RNA polymerase II transcription subunit 31 (soh1) (Aspergillus fumigatus (strain ATCC MYA-4609 / CBS 101355 / FGSC A1100 / Af293) (Neosartorya fumigata)).